We begin with the raw amino-acid sequence, 663 residues long: MAU2 chromatid cohesion factor homolog (663 aa).

2 TPR repeats span residues 455–488 (GGFY…ANAE) and 495–528 (SCSL…ASKI).

This sequence belongs to the SCC4/mau-2 family. Interacts with Nipped-B to form the cohesin loading complex.

It localises to the nucleus. It is found in the nucleoplasm. Functionally, required for association of the cohesin complex with chromatin during interphase. Plays a role in sister chromatid cohesion and normal progression through prometaphase. The chain is MAU2 chromatid cohesion factor homolog from Drosophila willistoni (Fruit fly).